Here is a 213-residue protein sequence, read N- to C-terminus: Probable septum site-determining protein MinC (213 aa).

The protein belongs to the MinC family. In terms of assembly, interacts with MinD and FtsZ.

In terms of biological role, cell division inhibitor that blocks the formation of polar Z ring septums. Rapidly oscillates between the poles of the cell to destabilize FtsZ filaments that have formed before they mature into polar Z rings. Prevents FtsZ polymerization. The sequence is that of Probable septum site-determining protein MinC from Pseudothermotoga lettingae (strain ATCC BAA-301 / DSM 14385 / NBRC 107922 / TMO) (Thermotoga lettingae).